Here is a 792-residue protein sequence, read N- to C-terminus: Endonuclease MutS2 (792 aa).

334–341 (GPNTGGKT) lines the ATP pocket. Residues 717–792 (INLIGKTTDE…DAGVTIATFK (76 aa)) form the Smr domain.

It belongs to the DNA mismatch repair MutS family. MutS2 subfamily. In terms of assembly, homodimer. Binds to stalled ribosomes, contacting rRNA.

Endonuclease that is involved in the suppression of homologous recombination and thus may have a key role in the control of bacterial genetic diversity. Its function is as follows. Acts as a ribosome collision sensor, splitting the ribosome into its 2 subunits. Detects stalled/collided 70S ribosomes which it binds and splits by an ATP-hydrolysis driven conformational change. Acts upstream of the ribosome quality control system (RQC), a ribosome-associated complex that mediates the extraction of incompletely synthesized nascent chains from stalled ribosomes and their subsequent degradation. Probably generates substrates for RQC. This chain is Endonuclease MutS2, found in Agathobacter rectalis (strain ATCC 33656 / DSM 3377 / JCM 17463 / KCTC 5835 / VPI 0990) (Eubacterium rectale).